Reading from the N-terminus, the 578-residue chain is NADPH oxidase 4 (578 aa).

The Cytoplasmic segment spans residues 1-16 (MALSWRSWLANEGVKH). Residues 17–37 (LCLLVWLSLNVLLFWKTFLLY) form a helical membrane-spanning segment. Residues 38–62 (NQGPEYYYIHQMLGLGLCLSRASAS) are Extracellular-facing. The Ferric oxidoreductase domain maps to 58 to 303 (RASASVLNLN…YCAERLYRCI (246 aa)). Residues 63 to 83 (VLNLNCSLILLPMCRTVLAYL) traverse the membrane as a helical segment. At 84–104 (RGSQKVPSRRTRRLLDKSKTL) the chain is on the cytoplasmic side. Residues 105 to 125 (HITCGITICIFSGVHVAAHLV) traverse the membrane as a helical segment. The Extracellular segment spans residues 126-154 (NALNFSVNYSEHFLALNAARYQNEDPRKL). Residue Asn-133 is glycosylated (N-linked (GlcNAc...) asparagine). A helical transmembrane segment spans residues 155–175 (LFTTVPGLTGVCMVVVLFLMV). The Cytoplasmic portion of the chain corresponds to 176–188 (TASTYAIRVSNYD). The chain crosses the membrane as a helical span at residues 189–209 (IFWYTHNLFFVFYMLLLLHVS). The Extracellular portion of the chain corresponds to 210-424 (GGLLKYQTNL…SPFEESLNYE (215 aa)). The segment at 218-273 (NLDTHPPGCISLNRTPSQNMSIADYVSEHFHGSLPGGFSKLEDHYQKTLVKICLEE) is E-loop; essential for H2O2 generating catalytic activity. The segment at 248-575 (HGSLPGGFSK…YGTKFEYNKE (328 aa)) is mediates interaction with TLR4. In terms of domain architecture, FAD-binding FR-type spans 304 to 419 (RSNKPVTIIS…DGPFGSPFEE (116 aa)). A helical membrane pass occupies residues 425–445 (VSLCVAGGIGVTPFASILNTL). The Cytoplasmic segment spans residues 446 to 578 (LDDWKPYKLR…KFEYNKESFS (133 aa)).

As to quaternary structure, interacts with TLR4. Interacts with, relocalizes and stabilizes CYBA/p22phox. Interacts with protein disulfide isomerase. Interacts with PPP1R15A. Interacts with LRRC8A; this interaction prevents the ubiquitin-mediated degradation of LRRC8A. Requires heme as cofactor. In terms of processing, N-glycosylation is required for the function. Expressed in vascular smooth muscle.

The protein resides in the cytoplasm. The protein localises to the endoplasmic reticulum membrane. It is found in the cell membrane. Its subcellular location is the cell junction. It localises to the focal adhesion. The protein resides in the nucleus. The enzyme catalyses NADPH + 2 O2 = 2 superoxide + NADP(+) + H(+). It carries out the reaction NADPH + O2 + H(+) = H2O2 + NADP(+). With respect to regulation, activated by insulin. Inhibited by diphenylene iodonium. Inhibited by plumbagin. Activated by phorbol 12-myristate 13-acetate (PMA). Its function is as follows. NADPH oxidase that catalyzes predominantly the reduction of oxygen to H2O2. Can also catalyze to a smaller extent, the reduction of oxygen to superoxide. May function as an oxygen sensor regulating the KCNK3/TASK-1 potassium channel and HIF1A activity. May regulate insulin signaling cascade. May play a role in apoptosis, bone resorption and lipolysaccharide-mediated activation of NFKB. May produce superoxide in the nucleus and play a role in regulating gene expression upon cell stimulation. Promotes ferroptosis, reactive oxygen species production and reduced glutathione (GSH) levels by activating NLRP3 inflammasome activation and cytokine release. The chain is NADPH oxidase 4 (Nox4) from Rattus norvegicus (Rat).